The following is a 628-amino-acid chain: ATP-dependent RNA helicase mrh4, mitochondrial (628 aa).

A mitochondrion-targeting transit peptide spans 1 to 40 (MSLAVRPPVCLLCRSGAPTLLPSSVSQVARSMATARLRRK). The segment at 51–109 (AKSSINQKRSGKAKFGPWSGMNQTEAHIRGEPRSRSQAALRRSGEKAADTPRKSDSPLY) is disordered. Over residues 92–105 (RSGEKAADTPRKSD) the composition is skewed to basic and acidic residues. The Q motif signature appears at 137–170 (TSFDHFPLLPVVRHSIFSQALPGLVDVTPTPIQR). One can recognise a Helicase ATP-binding domain in the interval 190 to 402 (EDGDPQYDQY…RKRYPDIKRL (213 aa)). 203–210 (AETGSGKT) is a binding site for ATP. Basic and acidic residues predominate over residues 228 to 253 (DKENERKEEERKAKEKEERLKNRAFD). Residues 228 to 260 (DKENERKEEERKAKEKEERLKNRAFDLEPEEPP) form a disordered region. Positions 349–352 (DEAD) match the DEAD box motif. The Helicase C-terminal domain maps to 456 to 628 (YVGPNIKKIL…EGMFRGQALI (173 aa)).

It belongs to the DEAD box helicase family. MRH4 subfamily.

It localises to the mitochondrion. The enzyme catalyses ATP + H2O = ADP + phosphate + H(+). ATP-binding RNA helicase involved in mitochondrial RNA metabolism. Required for maintenance of mitochondrial DNA. The polypeptide is ATP-dependent RNA helicase mrh4, mitochondrial (mrh4) (Aspergillus oryzae (strain ATCC 42149 / RIB 40) (Yellow koji mold)).